The sequence spans 294 residues: Ribosomal protein L11 methyltransferase (294 aa).

S-adenosyl-L-methionine contacts are provided by Thr146, Gly167, Asp189, and Asn231.

The protein belongs to the methyltransferase superfamily. PrmA family.

It is found in the cytoplasm. It catalyses the reaction L-lysyl-[protein] + 3 S-adenosyl-L-methionine = N(6),N(6),N(6)-trimethyl-L-lysyl-[protein] + 3 S-adenosyl-L-homocysteine + 3 H(+). Methylates ribosomal protein L11. The chain is Ribosomal protein L11 methyltransferase from Aliivibrio fischeri (strain ATCC 700601 / ES114) (Vibrio fischeri).